Consider the following 392-residue polypeptide: Peptidoglycan hydrolase PcsB (392 aa).

Positions 1 to 27 (MKKKILASLLLSTVMVSQVAVLTTAHA) are cleaved as a signal peptide. Coiled coils occupy residues 34-96 (IAAQ…LSKN) and 191-227 (TKQA…AEAE). An interacts with large extracellular loop of FtsX region spans residues 47–267 (QQQEAQKQVD…TAQVQAVSES (221 aa)). One can recognise a Peptidase C51 domain in the interval 267–390 (SAAAPVRAKV…TSEGFVTYIY (124 aa)).

Homodimer. Interacts (via N-terminal coiled coil domain) with FtsX (via large extracellular loop). This interaction directs PcsB to equatorial and septal sites of dividing cells. Interacts with FtsE.

Its subcellular location is the cell membrane. The protein localises to the cell septum. It localises to the secreted. Its activity is regulated as follows. Lacks peptidoglycan-hydrolase activity in vitro, probably due to auto-inhibition by the CC domain. In the homodimer, interaction between the CC domain in one monomer and the hydrolase active site in the peptidase C51/CHAP domain in the other monomer probably mediates auto-inhibition of the hydrolase activity. Peptidoglycan-hydrolase activity. Required in maintaining normal growth and cellular morphology. Involved in splitting of the septum during cell division. In Streptococcus pneumoniae serotype 2 (strain D39 / NCTC 7466), this protein is Peptidoglycan hydrolase PcsB.